The chain runs to 339 residues: Peroxidase 29 (339 aa).

The N-terminal stretch at methionine 1–glycine 28 is a signal peptide. 4 cysteine pairs are disulfide-bonded: cysteine 47–cysteine 127, cysteine 80–cysteine 85, cysteine 133–cysteine 335, and cysteine 213–cysteine 242. Histidine 78 (proton acceptor) is an active-site residue. Ca(2+)-binding residues include aspartate 79, valine 82, glycine 84, aspartate 86, and serine 88. Position 176 (proline 176) interacts with substrate. Residue histidine 206 coordinates heme b. Threonine 207 contacts Ca(2+). Asparagine 224 is a glycosylation site (N-linked (GlcNAc...) asparagine). Residues aspartate 260, threonine 262, and aspartate 267 each coordinate Ca(2+).

This sequence belongs to the peroxidase family. Classical plant (class III) peroxidase subfamily. The cofactor is heme b. Requires Ca(2+) as cofactor.

It localises to the secreted. The catalysed reaction is 2 a phenolic donor + H2O2 = 2 a phenolic radical donor + 2 H2O. In terms of biological role, removal of H(2)O(2), oxidation of toxic reductants, biosynthesis and degradation of lignin, suberization, auxin catabolism, response to environmental stresses such as wounding, pathogen attack and oxidative stress. These functions might be dependent on each isozyme/isoform in each plant tissue. The polypeptide is Peroxidase 29 (PER29) (Arabidopsis thaliana (Mouse-ear cress)).